Here is a 228-residue protein sequence, read N- to C-terminus: MAAQPQDREGGAQLAGPAAEADPLGRFTCPVCLEVYEKPVQVPCGHVFCSACLQECLKPKKPVCGVCRSTLAPGVRAVELERQIESTETSCHGCRKNFFLSKIRAHVATCSKYQNYIMEGVKATTKDASLQPRNVPNRYTFPCPYCPEKNFDQEGLVEHCKLVHSTDTKSVVCPICASMPWGDPNYRSANFIEHIQRRHQFSYDTFVDYDVDEEDMMNQVLQRSLLDQ.

Residues 29-68 (CPVCLEVYEKPVQVPCGHVFCSACLQECLKPKKPVCGVCR) form an RING-type zinc finger. Zn(2+) contacts are provided by C91 and C94. A C2HC RNF-type zinc finger spans residues 91–110 (CHGCRKNFFLSKIRAHVATC). Residue K102 is modified to N6-acetyllysine. Positions 106 and 110 each coordinate Zn(2+). An N6-acetyllysine modification is found at K112.

Interacts with XAF1, the interaction increases XAF1 stability and proapoptotic effects, and may regulate IFN signaling. Autoubiquitinated. Polyubiquitinated in the presence of E2 enzymes UBE2D1, UBE2D2 and UBE2D3, but only monoubiquitinated in the presence of UBE2E1.

The protein resides in the cytoplasm. Its subcellular location is the nucleus. It carries out the reaction S-ubiquitinyl-[E2 ubiquitin-conjugating enzyme]-L-cysteine + [acceptor protein]-L-lysine = [E2 ubiquitin-conjugating enzyme]-L-cysteine + N(6)-ubiquitinyl-[acceptor protein]-L-lysine.. Its pathway is protein modification; protein ubiquitination. Functionally, E3 ubiquitin-protein ligase that promotes the ubiquitination of various substrates. In turn, participates in the regulation of many biological processes including cell cycle, apoptosis, osteoclastogenesis as well as innate or adaptive immunity. Acts as negative regulator of NF-kappa-B-dependent transcription by promoting the ubiquitination and stabilization of the NF-kappa-B inhibitor TNFAIP3. May promote the ubiquitination of TRAF6 as well. Also acts as a negative regulator of T-cell activation. Inhibits cellular dsRNA responses and interferon production by targeting MAVS component for proteasomal degradation. Ubiquitinates the CDK inhibitor CDKN1A leading to its degradationand probably also CDKN1B and CDKN1C. This activity stimulates cell cycle G1-to-S phase transition and suppresses cellular senescence. May play a role in spermatogenesis. Inhibits classical swine fever virus replication by mediating 'K27'-linked ubiquitination of viral NS4B and inducing its degradation via the proteasome. In Sus scrofa (Pig), this protein is E3 ubiquitin-protein ligase RNF114 (RNF114).